A 1303-amino-acid chain; its full sequence is Phosphoribosylformylglycinamidine synthase (1303 aa).

Residues G308–D319 and A679 contribute to the ATP site. E719, N723, and D892 together coordinate Mg(2+). The tract at residues L1003–P1023 is disordered. Residues D1011–S1021 are compositionally biased toward basic and acidic residues. In terms of domain architecture, Glutamine amidotransferase type-1 spans M1050–G1303. C1143 acts as the Nucleophile in catalysis. Residues H1268 and E1270 contribute to the active site.

It in the N-terminal section; belongs to the FGAMS family. In terms of assembly, monomer.

The protein resides in the cytoplasm. The enzyme catalyses N(2)-formyl-N(1)-(5-phospho-beta-D-ribosyl)glycinamide + L-glutamine + ATP + H2O = 2-formamido-N(1)-(5-O-phospho-beta-D-ribosyl)acetamidine + L-glutamate + ADP + phosphate + H(+). The protein operates within purine metabolism; IMP biosynthesis via de novo pathway; 5-amino-1-(5-phospho-D-ribosyl)imidazole from N(2)-formyl-N(1)-(5-phospho-D-ribosyl)glycinamide: step 1/2. Functionally, phosphoribosylformylglycinamidine synthase involved in the purines biosynthetic pathway. Catalyzes the ATP-dependent conversion of formylglycinamide ribonucleotide (FGAR) and glutamine to yield formylglycinamidine ribonucleotide (FGAM) and glutamate. The protein is Phosphoribosylformylglycinamidine synthase of Aliivibrio fischeri (strain ATCC 700601 / ES114) (Vibrio fischeri).